The chain runs to 323 residues: Cuticle collagen 39 (323 aa).

An N-terminal signal peptide occupies residues 1–28 (MTGPTCLAVVAGISGVFVFGALFSVAQI). A compositionally biased stretch (polar residues) spans 80 to 89 (QCNCGPQASN). The tract at residues 80–293 (QCNCGPQASN…GAAEQGYRHR (214 aa)) is disordered. Triple-helical region regions lie at residues 93 to 125 (GPPGPPGAPGDRGLDGQPGGAGNPGQPGVAGPK), 138 to 200 (GSPG…GGQR), and 203 to 265 (GLPG…PGAD). Residues 108–117 (GQPGGAGNPG) show a composition bias toward gly residues. Low complexity predominate over residues 136-146 (PAGSPGPAGAP). Gly residues predominate over residues 159-168 (GHPGQGGSQG). The segment covering 169 to 191 (PAGPRGPAGDAGAPGQVGAPGNP) has biased composition (low complexity). Residues 224–233 (GQSGGQGQQG) are compositionally biased toward gly residues. A compositionally biased stretch (low complexity) spans 234 to 267 (PAGPAGPDGQPGQPGQDGQAGAPGNDGAPGADAA).

It belongs to the cuticular collagen family. Collagen polypeptide chains are complexed within the cuticle by disulfide bonds and other types of covalent cross-links.

Functionally, nematode cuticles are composed largely of collagen-like proteins. The cuticle functions both as an exoskeleton and as a barrier to protect the worm from its environment. In Caenorhabditis elegans, this protein is Cuticle collagen 39 (col-39).